The following is a 326-amino-acid chain: Probable cell division protein WhiA (326 aa).

The H-T-H motif DNA-binding region spans 275 to 308; that stretch reads SLDELGHHADPPMTKDAVAGRIRRLLAMADKKAV.

Belongs to the WhiA family.

Its function is as follows. Involved in cell division and chromosome segregation. This chain is Probable cell division protein WhiA, found in Clavibacter sepedonicus (Clavibacter michiganensis subsp. sepedonicus).